A 296-amino-acid chain; its full sequence is 4-amino-4-deoxyprephenate dehydrogenase (296 aa).

Residues 9 to 288 (RCVVVGGAGA…EHGAELERLC (280 aa)) form the Prephenate/arogenate dehydrogenase domain.

It belongs to the prephenate/arogenate dehydrogenase family.

It carries out the reaction 4-amino-4-deoxyprephenate + NAD(+) = 3-(4-aminophenyl)pyruvate + CO2 + NADH + H(+). It functions in the pathway antibiotic biosynthesis. In terms of biological role, involved in pristinamycin I biosynthesis. Probably catalyzes the formation of 3-(4-aminophenyl)pyruvate from 4-amino-4-deoxyprephenate. In Streptomyces pristinaespiralis, this protein is 4-amino-4-deoxyprephenate dehydrogenase.